Here is a 404-residue protein sequence, read N- to C-terminus: Calcium/calmodulin-dependent protein kinase cmkB (404 aa).

Positions 18–279 constitute a Protein kinase domain; it reads YKTGKTLGAG…AHQALQHPWI (262 aa). ATP is bound by residues 24-32 and Lys-47; that span reads LGAGLYSVV. Asp-141 (proton acceptor) is an active-site residue. Thr-179 bears the Phosphothreonine; by cmkC mark. The tract at residues 279-322 is autoinhibitory domain; it reads INPPYDTTDDLGSGEDLLPNIKKNFNARRTLHKAIDTVRAINKL. Positions 301-323 are calmodulin-binding; sequence KNFNARRTLHKAIDTVRAINKLR. The interval 336–404 is disordered; it reads VDPKPEHVNG…WSRTAPRSER (69 aa). 2 stretches are compositionally biased toward basic and acidic residues: residues 338–370 and 379–389; these read PKPEHVNGSEVVEDRTTPRERENEDAMEIDSRS and QIREQERKVKE.

The protein belongs to the protein kinase superfamily. CAMK Ser/Thr protein kinase family. CaMK subfamily. Phosphorylated by cmkC on Thr-179.

The catalysed reaction is L-seryl-[protein] + ATP = O-phospho-L-seryl-[protein] + ADP + H(+). It catalyses the reaction L-threonyl-[protein] + ATP = O-phospho-L-threonyl-[protein] + ADP + H(+). Its activity is regulated as follows. Activated by Ca(2+)/calmodulin. Binding of calmodulin results in conformational change that relieves intrasteric autoinhibition and allows phosphorylation of Thr-179 within the activation loop by cmkC. Calcium/calmodulin-dependent protein kinase that operates in the calcium-triggered CaMKK-CaMK1 signaling cascade. Required in G1-phase of the cell cycle for proper timing of the initial nuclear division after germination, but not for subsequent mitoses. Required for the normal temporal regulation of nimX activity. The protein is Calcium/calmodulin-dependent protein kinase cmkB of Emericella nidulans (Aspergillus nidulans).